We begin with the raw amino-acid sequence, 296 residues long: Nucleotide-binding protein Pnec_1620 (296 aa).

Residue 8-15 participates in ATP binding; the sequence is GISGSGKS. GTP is bound at residue 57–60; it reads DARR.

Belongs to the RapZ-like family.

In terms of biological role, displays ATPase and GTPase activities. The chain is Nucleotide-binding protein Pnec_1620 from Polynucleobacter necessarius subsp. necessarius (strain STIR1).